We begin with the raw amino-acid sequence, 151 residues long: Immunity protein YezG (151 aa).

The stretch at Lys62–Val90 forms a coiled coil.

Interacts with cognate toxin YeeF but not with non-cognate toxin YobL. The interaction probably inhibits the toxic activity of YeeF. May bind with a stoichiometry of 2:2 to YeeF.

The protein localises to the cytoplasm. Functionally, immunity component of one of 6 LXG toxin-immunity modules in this strain. They promote kin selection, mediate competition in biofilms, and drive spatial segregation of different strains, indicating that LXG toxins may help avoid warfare between strains in biofilms. Mediates intercellular competition during biofilm formation; disruption of the operon disadvantages the bacteria, but overexpression of the cognate immunity protein restores growth in competition with wild-type. In situ neutralizes the toxic effect of cognate toxin YeeF. Probably neutralizes the ability to inhibit growth of cognate toxin YeeF. Probably does not have immunity protein activity on other LXG toxins. The sequence is that of Immunity protein YezG (yezG) from Bacillus subtilis (strain 168).